We begin with the raw amino-acid sequence, 514 residues long: M-phase inducer phosphatase 1 (514 aa).

The Phosphodegron motif lies at 73 to 83; sequence MGSSESTDSGF. A Phosphoserine; by CHEK1 modification is found at Ser75. Phosphoserine; by NEK11 is present on residues Ser78, Ser81, and Ser87. Phosphoserine is present on Ser106. At Ser123 the chain carries Phosphoserine; by CHEK1 and CHEK2. The KEN box signature appears at 140–142; that stretch reads KEN. Ser172 carries the phosphoserine; by CHEK1 modification. Residues 256–308 form a disordered region; it reads PCGSSTRAVLKRADRSHEEPPRGTKRRKSVPSPVKAKADVPEPAQLPSQSLSL. Basic and acidic residues predominate over residues 266 to 277; that stretch reads KRADRSHEEPPR. Ser271 and Ser284 each carry phosphoserine; by CHEK1 and CHEK2. Phosphoserine is present on Ser311. Residues 366-472 enclose the Rhodanese domain; that stretch reads LIKEFVIIDC…FFLKCQSHCE (107 aa). The active site involves Cys421. Residue Thr497 is modified to Phosphothreonine; by CHEK1. Phosphoserine; by PLK3 occurs at positions 503 and 509.

The protein belongs to the MPI phosphatase family. Interacts with CCNB1/cyclin B1. Interacts with YWHAE/14-3-3 epsilon when phosphorylated. Interacts with CUL1 specifically when CUL1 is neddylated and active. Interacts with BTRC/BTRCP1 and FBXW11/BTRCP2. Interactions with CUL1, BTRC and FBXW11 are enhanced upon DNA damage. Interacts with CHEK2; mediates CDC25A phosphorylation and degradation in response to infrared-induced DNA damages. Interacts with HSP90AB1; prevents heat shock-mediated CDC25A degradation and contributes to cell cycle progression. In terms of processing, phosphorylated by CHEK1 on Ser-75, Ser-123, Ser-172, Ser-271, Ser-284 and Thr-497 during checkpoint mediated cell cycle arrest. Also phosphorylated by CHEK2 on Ser-123, Ser-271, and Ser-284 during checkpoint mediated cell cycle arrest. Phosphorylation on Ser-172 and Thr-497 creates binding sites for YWHAE/14-3-3 epsilon which inhibits CDC25A. Phosphorylation on Ser-75, Ser-123, Ser-172, Ser-271 and Ser-284 may also promote ubiquitin-dependent proteolysis of CDC25A by the SCF complex. Phosphorylation of CDC25A at Ser-75 by CHEK1 primes it for subsequent phosphorylation at Ser-75, Ser-81 and Ser-87 by NEK11. Phosphorylation by NEK11 is required for BTRC-mediated polyubiquitination and degradation. Phosphorylation by PIM1 leads to an increase in phosphatase activity. Phosphorylated by PLK3 following DNA damage, leading to promote its ubiquitination and degradation. Ubiquitinated by the anaphase promoting complex/cyclosome (APC/C) ubiquitin ligase complex that contains FZR1/CDH1 during G1 phase leading to its degradation by the proteasome. Ubiquitinated by a SCF complex containing BTRC and FBXW11 during S phase leading to its degradation by the proteasome. Deubiquitination by USP17L2/DUB3 leads to its stabilization. In terms of tissue distribution, ubiquitously expressed in most developing tissue. High levels in the testis and lower levels in the ovary, particularly in germ cells. Lower levels also in kidney, liver, heart and muscle.

The enzyme catalyses O-phospho-L-tyrosyl-[protein] + H2O = L-tyrosyl-[protein] + phosphate. Its activity is regulated as follows. Stimulated by B-type cyclins. Stimulated by PIM1-mediated phosphorylation. Tyrosine protein phosphatase which functions as a dosage-dependent inducer of mitotic progression. Directly dephosphorylates CDK1 and stimulates its kinase activity. Also dephosphorylates CDK2 in complex with cyclin-E, in vitro. This Mus musculus (Mouse) protein is M-phase inducer phosphatase 1 (Cdc25a).